Reading from the N-terminus, the 124-residue chain is Transcription initiation factor IIA subunit 2 (124 aa).

Belongs to the TFIIA subunit 2 family. TFIIA is a heterodimer composed of the large TOA1 and the small TOA2 subunits.

It is found in the nucleus. In terms of biological role, TFIIA is a component of the transcription machinery of RNA polymerase II and plays an important role in transcriptional activation. TFIIA in a complex with tbp mediates transcriptional activity. The polypeptide is Transcription initiation factor IIA subunit 2 (TOA2) (Cryptococcus neoformans var. neoformans serotype D (strain JEC21 / ATCC MYA-565) (Filobasidiella neoformans)).